The following is a 180-amino-acid chain: Small ribosomal subunit protein uS5 (180 aa).

An S5 DRBM domain is found at 24–87 (MIEKLVAVNR…EQARKNLVSV (64 aa)).

This sequence belongs to the universal ribosomal protein uS5 family. As to quaternary structure, part of the 30S ribosomal subunit. Contacts proteins S4 and S8.

Functionally, with S4 and S12 plays an important role in translational accuracy. Its function is as follows. Located at the back of the 30S subunit body where it stabilizes the conformation of the head with respect to the body. The protein is Small ribosomal subunit protein uS5 of Stenotrophomonas maltophilia (strain R551-3).